We begin with the raw amino-acid sequence, 390 residues long: Probable protein phosphatase 2C 30 (390 aa).

A compositionally biased stretch (polar residues) spans 1 to 10 (MQLSKNPIKQ). 2 disordered regions span residues 1–20 (MQLSKNPIKQTRNREKNYTD) and 40–85 (PPLV…DSET). Over residues 44-61 (FSPTSVKTPLSSPRSSPP) the composition is skewed to low complexity. A PPM-type phosphatase domain is found at 128 to 385 (YYSVYCKRGR…DDISLIIIQL (258 aa)). Residues D166, G167, D331, and D376 each coordinate Mn(2+).

The protein belongs to the PP2C family. Mg(2+) serves as cofactor. It depends on Mn(2+) as a cofactor.

It carries out the reaction O-phospho-L-seryl-[protein] + H2O = L-seryl-[protein] + phosphate. The catalysed reaction is O-phospho-L-threonyl-[protein] + H2O = L-threonyl-[protein] + phosphate. This Arabidopsis thaliana (Mouse-ear cress) protein is Probable protein phosphatase 2C 30 (PP2C5).